The primary structure comprises 254 residues: 3-deoxy-manno-octulosonate cytidylyltransferase (254 aa).

This sequence belongs to the KdsB family.

Its subcellular location is the cytoplasm. The enzyme catalyses 3-deoxy-alpha-D-manno-oct-2-ulosonate + CTP = CMP-3-deoxy-beta-D-manno-octulosonate + diphosphate. It functions in the pathway nucleotide-sugar biosynthesis; CMP-3-deoxy-D-manno-octulosonate biosynthesis; CMP-3-deoxy-D-manno-octulosonate from 3-deoxy-D-manno-octulosonate and CTP: step 1/1. Its pathway is bacterial outer membrane biogenesis; lipopolysaccharide biosynthesis. Its function is as follows. Activates KDO (a required 8-carbon sugar) for incorporation into bacterial lipopolysaccharide in Gram-negative bacteria. In Pseudomonas fluorescens (strain SBW25), this protein is 3-deoxy-manno-octulosonate cytidylyltransferase.